Here is a 249-residue protein sequence, read N- to C-terminus: Proteasome subunit alpha type-7-1 (249 aa).

Residue S177 is modified to Phosphoserine.

It belongs to the peptidase T1A family. The 26S proteasome consists of a 20S proteasome core and two 19S regulatory subunits. The 20S proteasome core is composed of 28 subunits that are arranged in four stacked rings, resulting in a barrel-shaped structure. The two end rings are each formed by seven alpha subunits, and the two central rings are each formed by seven beta subunits. The catalytic chamber with the active sites is on the inside of the barrel. Interacts with PI31; this interaction is reduced by PI31 ADP-ribosylation.

The protein resides in the cytoplasm. The protein localises to the nucleus. In terms of biological role, the proteasome is a multicatalytic proteinase complex which is characterized by its ability to cleave peptides with Arg, Phe, Tyr, Leu, and Glu adjacent to the leaving group at neutral or slightly basic pH. The proteasome has an ATP-dependent proteolytic activity. In Drosophila melanogaster (Fruit fly), this protein is Proteasome subunit alpha type-7-1 (Prosalpha4).